The sequence spans 537 residues: Zinc finger protein 703 (537 aa).

Disordered regions lie at residues 1 to 38, 90 to 254, and 300 to 323; these read MNCSPPGSSTDTERQSSSSGTPVAPRPTLAPTHPLRQA, SQIG…VAPV, and VGNQLPGTLGLPGKPPSSSPLTGA. The segment covering 101 to 111 has biased composition (polar residues); the sequence is SKLNSVTSSGL. Low complexity predominate over residues 149 to 158; the sequence is GSSSGGAADK. Polar residues predominate over residues 176 to 185; sequence SPSSRVSSPG. Over residues 188-203 the composition is skewed to basic and acidic residues; that stretch reads CDSKNNESQEKKEPEA. Over residues 205–220 the composition is skewed to polar residues; that stretch reads KANSETSQVNPTLTRA. The segment covering 221 to 232 has biased composition (low complexity); it reads STSNSSAESSQS. A C2H2-type zinc finger spans residues 409 to 437; it reads HICNWVSASGPCDKRFSTSEELLAHLRTH.

Belongs to the Elbow/Noc family.

The protein localises to the nucleus. It is found in the cytoplasm. Its function is as follows. Transcriptional corepressor which does not bind directly to DNA and may regulate transcription through recruitment of histone deacetylases to gene promoters. Regulates cell adhesion, migration and proliferation. Involved in specification of the lateral neural plate border (NPB). May be required for segmental gene expression during hindbrain development. The polypeptide is Zinc finger protein 703 (znf703) (Xenopus tropicalis (Western clawed frog)).